Here is a 104-residue protein sequence, read N- to C-terminus: Conantokin-P (104 aa).

The first 26 residues, 1–26 (MQLYTYLYLLVPLVTFHLILSTGTLA), serve as a signal peptide directing secretion. Residues 27–80 (HGGTLTERRSTDTTALKPEPVLLQKSDARSTDDNDKDRLTQMKRILKKRGNKAR) constitute a propeptide that is removed on maturation. The disordered stretch occupies residues 29–87 (GTLTERRSTDTTALKPEPVLLQKSDARSTDDNDKDRLTQMKRILKKRGNKARGEEEHSK). Residues 52-66 (SDARSTDDNDKDRLT) are compositionally biased toward basic and acidic residues. A 4-carboxyglutamate mark is found at Glu-83, Glu-84, Glu-90, Glu-94, and Glu-103. Residues Glu-90 and Glu-94 each coordinate a divalent metal cation. Cys-91 and Cys-104 are disulfide-bonded.

The protein belongs to the conotoxin B superfamily. Expressed by the venom duct.

The protein resides in the secreted. Conantokins inhibit N-methyl-D-aspartate (NMDA) receptors. This toxin has the highest potency for the NR2B/GRIN2B subunit, followed by NR2A/GRIN2A, NR2C/GRIN2C, and NR2D/GRIN2D subunits. The sequence is that of Conantokin-P from Conus purpurascens (Purple cone).